We begin with the raw amino-acid sequence, 338 residues long: Ornithine carbamoyltransferase (338 aa).

Residue serine 2 is modified to N-acetylserine. Residues serine 67–threonine 70, arginine 118, histidine 145, and glutamine 148 contribute to the carbamoyl phosphate site. Residues asparagine 185, aspartate 249, serine 253, and methionine 254 each contribute to the L-ornithine site. Residue cysteine 289 is the Proton acceptor of the active site. Carbamoyl phosphate-binding positions include cysteine 289–leucine 290 and arginine 316.

The protein belongs to the aspartate/ornithine carbamoyltransferase superfamily. OTCase family. As to quaternary structure, interacts with CAR1.

The protein localises to the cytoplasm. It catalyses the reaction carbamoyl phosphate + L-ornithine = L-citrulline + phosphate + H(+). It functions in the pathway amino-acid biosynthesis; L-arginine biosynthesis; L-arginine from L-ornithine and carbamoyl phosphate: step 1/3. With respect to regulation, forms a stable complex with CAR1 in the presence of ornithine and arginine. In this complex CAR1 retains activity, but ARG3 activity is inhibited. The protein is Ornithine carbamoyltransferase (ARG3) of Saccharomyces cerevisiae (strain ATCC 204508 / S288c) (Baker's yeast).